The sequence spans 282 residues: Probable endonuclease 4 (282 aa).

Residues H66, H106, E143, D177, H180, H214, D227, H229, and E259 each contribute to the Zn(2+) site.

Belongs to the AP endonuclease 2 family. Zn(2+) serves as cofactor.

The catalysed reaction is Endonucleolytic cleavage to 5'-phosphooligonucleotide end-products.. Functionally, endonuclease IV plays a role in DNA repair. It cleaves phosphodiester bonds at apurinic or apyrimidinic (AP) sites, generating a 3'-hydroxyl group and a 5'-terminal sugar phosphate. This chain is Probable endonuclease 4, found in Nitratidesulfovibrio vulgaris (strain DP4) (Desulfovibrio vulgaris).